The primary structure comprises 106 residues: Iron-sulfur cluster assembly protein CyaY (106 aa).

It belongs to the frataxin family.

Involved in iron-sulfur (Fe-S) cluster assembly. May act as a regulator of Fe-S biogenesis. This chain is Iron-sulfur cluster assembly protein CyaY, found in Escherichia coli (strain SMS-3-5 / SECEC).